The following is a 223-amino-acid chain: Cytidylate kinase (223 aa).

Residue 10–18 (GPAGSGKSS) coordinates ATP.

This sequence belongs to the cytidylate kinase family. Type 1 subfamily.

The protein localises to the cytoplasm. It carries out the reaction CMP + ATP = CDP + ADP. The enzyme catalyses dCMP + ATP = dCDP + ADP. The polypeptide is Cytidylate kinase (Pseudothermotoga lettingae (strain ATCC BAA-301 / DSM 14385 / NBRC 107922 / TMO) (Thermotoga lettingae)).